The sequence spans 165 residues: MRKKYRKVVVGGTFDRLHLGHKALLRKAFEVGKIVYIGLTSDEMVRNKPYAERILPYEHRLKDLLKFIEVNGYTNYRIIKIHTAIGFADSMKSLEAIVVSEETYKGALIVNRAREEKGLKPLDIVTIPIIKSYLGDKISSSLIRAGLIDPFGRPLHWKGNSPKDV.

The protein belongs to the eukaryotic CoaD family.

Its subcellular location is the cytoplasm. The catalysed reaction is (R)-4'-phosphopantetheine + ATP + H(+) = 3'-dephospho-CoA + diphosphate. The protein operates within cofactor biosynthesis; coenzyme A biosynthesis. In terms of biological role, reversibly transfers an adenylyl group from ATP to 4'-phosphopantetheine, yielding dephospho-CoA (dPCoA) and pyrophosphate. The protein is Phosphopantetheine adenylyltransferase of Thermococcus kodakarensis (strain ATCC BAA-918 / JCM 12380 / KOD1) (Pyrococcus kodakaraensis (strain KOD1)).